A 284-amino-acid polypeptide reads, in one-letter code: MVNTSDFKEIIENAWCDIANISTNTSITGVIDEIMDLLDQGKVRVSEKINGQWIVNEWIKKAILLSFRIYDMKFVYTNCHDSIIGNFSWFDKIPLKFGQWNADNFKQAKIRVVPGAIVRKSAYIAPGAVLMPSFVNVGAYVGEGTMVDTWASVGSCAQVGKNCHISGGAGIGGVLEPLTASPVIIEDNCFIGARSEIVEGVIVEEGAVVSMGVYIGASTKIIDRTSGEVFFGRVPAYSVVVPGSYSSGNVSIYCAIIVKKVDQNTRNKVSINELLRDNYAATSI.

Residues arginine 111 and aspartate 148 each contribute to the substrate site.

The protein belongs to the transferase hexapeptide repeat family. Homotrimer.

The protein resides in the cytoplasm. It carries out the reaction (S)-2,3,4,5-tetrahydrodipicolinate + succinyl-CoA + H2O = (S)-2-succinylamino-6-oxoheptanedioate + CoA. It functions in the pathway amino-acid biosynthesis; L-lysine biosynthesis via DAP pathway; LL-2,6-diaminopimelate from (S)-tetrahydrodipicolinate (succinylase route): step 1/3. This chain is 2,3,4,5-tetrahydropyridine-2,6-dicarboxylate N-succinyltransferase, found in Ehrlichia ruminantium (strain Gardel).